The chain runs to 329 residues: Acetyl-coenzyme A carboxylase carboxyl transferase subunit alpha (329 aa).

The CoA carboxyltransferase C-terminal domain maps to 40 to 294 (QLESLAARRR…RAALERHLGE (255 aa)).

This sequence belongs to the AccA family. Acetyl-CoA carboxylase is a heterohexamer composed of biotin carboxyl carrier protein (AccB), biotin carboxylase (AccC) and two subunits each of ACCase subunit alpha (AccA) and ACCase subunit beta (AccD).

It localises to the cytoplasm. It carries out the reaction N(6)-carboxybiotinyl-L-lysyl-[protein] + acetyl-CoA = N(6)-biotinyl-L-lysyl-[protein] + malonyl-CoA. The protein operates within lipid metabolism; malonyl-CoA biosynthesis; malonyl-CoA from acetyl-CoA: step 1/1. Component of the acetyl coenzyme A carboxylase (ACC) complex. First, biotin carboxylase catalyzes the carboxylation of biotin on its carrier protein (BCCP) and then the CO(2) group is transferred by the carboxyltransferase to acetyl-CoA to form malonyl-CoA. This is Acetyl-coenzyme A carboxylase carboxyl transferase subunit alpha from Parasynechococcus marenigrum (strain WH8102).